Here is a 1252-residue protein sequence, read N- to C-terminus: DNA-directed RNA polymerase subunit beta (1252 aa).

This sequence belongs to the RNA polymerase beta chain family. As to quaternary structure, the RNAP catalytic core consists of 2 alpha, 1 beta, 1 beta' and 1 omega subunit. When a sigma factor is associated with the core the holoenzyme is formed, which can initiate transcription.

It carries out the reaction RNA(n) + a ribonucleoside 5'-triphosphate = RNA(n+1) + diphosphate. In terms of biological role, DNA-dependent RNA polymerase catalyzes the transcription of DNA into RNA using the four ribonucleoside triphosphates as substrates. The protein is DNA-directed RNA polymerase subunit beta of Chlamydia trachomatis serovar L2 (strain ATCC VR-902B / DSM 19102 / 434/Bu).